A 495-amino-acid polypeptide reads, in one-letter code: Neuronal acetylcholine receptor subunit alpha-3 (495 aa).

Positions Met-1 to Thr-21 are cleaved as a signal peptide. Topologically, residues Ser-22–Ile-240 are extracellular. N-linked (GlcNAc...) asparagine glycosylation is found at Asn-45 and Asn-162. 2 disulfide bridges follow: Cys-149-Cys-163 and Cys-213-Cys-214. A helical membrane pass occupies residues Pro-241–Pro-256. Over Ser-257–Asp-258 the chain is Cytoplasmic. A helical transmembrane segment spans residues Cys-259–Val-275. A Na(+)-binding site is contributed by Glu-261. The Extracellular segment spans residues Phe-276–Tyr-297. A helical membrane pass occupies residues Leu-298–Leu-316. The Cytoplasmic portion of the chain corresponds to Asn-317–Val-464. Residues Ser-403 and Ser-406 each carry the phosphoserine modification. Residues Ile-465–Gly-483 form a helical membrane-spanning segment. The Extracellular segment spans residues Leu-484–Ala-495.

Belongs to the ligand-gated ion channel (TC 1.A.9) family. Acetylcholine receptor (TC 1.A.9.1) subfamily. Alpha-3/CHRNA3 sub-subfamily. As to quaternary structure, neuronal AChR is composed of two different types of subunits: alpha and beta. CHRNA3/Alpha-3 subunit can be combined to CHRNB2/beta-2 or CHRNB4/beta-4 to give rise to functional receptors. Part of a complex composed of STUB1/CHIP, VCP/p97, CHRNA3, and UBXN2A that modulates the ubiquitination and endoplasmic reticulum-associated degradation (ERAD) of CHRNA3. Within the complex UBXN2A acts as a scaffold protein required for the interaction of CHRNA3 with VCP/p97, this interaction also inhibits CHRNA3 ubiquitination by STUB1/CHIP and subsequently ERAD. Interacts with UBXN2A (via SEP domain), the interaction is required for the interaction of CHRNA3 in the STUB1:VCP:UBXN2A complex. Interacts with RIC3; which is required for proper folding and assembly. Interacts with LYPD6. In terms of processing, ubiquitinated; by STUB1/CHIP and thereafter degraded by the 26S proteosome complex.

Its subcellular location is the synaptic cell membrane. It localises to the cell membrane. The protein resides in the endoplasmic reticulum. It is found in the golgi apparatus. It carries out the reaction K(+)(in) = K(+)(out). The catalysed reaction is Na(+)(in) = Na(+)(out). The enzyme catalyses Ca(2+)(in) = Ca(2+)(out). With respect to regulation, activated by a myriad of ligands such as acetylcholine, cytisine, nicotine, choline and epibatidine. The heteropentamer CHRNA3:CHRNB2 activity is blocked by alpha-conotoxins ImI, ImII, PnIA, GID and MII. The heteropentamer CHRNA3:CHRNB4 activity is blocked by the alpha-conotoxin ImI and AuIB. Component of neuronal acetylcholine receptors (nAChRs) that function as pentameric, ligand-gated cation channels with high calcium permeability among other activities. nAChRs are excitatory neurotrasnmitter receptors formed by a collection of nAChR subunits known to mediate synaptic transmission in the nervous system and the neuromuscular junction. Each nAchR subunit confers differential attributes to channel properties, including activation, deactivation and desensitization kinetics, pH sensitivity, cation permeability, and binding to allosteric modulators. CHRNA3 forms heteropentameric neuronal acetylcholine receptors with CHRNB2 and CHRNB4. CHRNA3:CHRNB4 being predominant in neurons of the autonomic ganglia, it is known as ganglionic nicotinic receptor. CHRNA3:CHRNB4 also plays an important role in the habenulo-interpeduncular tract, modulating the mesolimbic dopamine system and affecting reward circuits and addiction. Hypothalamic CHRNA3:CHRNB4 nAChR activation by nicotine leads to activation of POMC neurons and a decrease in food intake. Also expressed in the urothelium where it modulates reflex bladder activity by increasing intracellular calcium through extracellular influx and basal ATP release. In Bos taurus (Bovine), this protein is Neuronal acetylcholine receptor subunit alpha-3 (CHRNA3).